We begin with the raw amino-acid sequence, 157 residues long: UPF0178 protein Nwi_2152 (157 aa).

This sequence belongs to the UPF0178 family.

This chain is UPF0178 protein Nwi_2152, found in Nitrobacter winogradskyi (strain ATCC 25391 / DSM 10237 / CIP 104748 / NCIMB 11846 / Nb-255).